A 116-amino-acid polypeptide reads, in one-letter code: Large ribosomal subunit protein bL19 (116 aa).

The protein belongs to the bacterial ribosomal protein bL19 family.

Its function is as follows. This protein is located at the 30S-50S ribosomal subunit interface and may play a role in the structure and function of the aminoacyl-tRNA binding site. The chain is Large ribosomal subunit protein bL19 from Stutzerimonas stutzeri (strain A1501) (Pseudomonas stutzeri).